The following is a 152-amino-acid chain: Ribonuclease H (152 aa).

In terms of domain architecture, RNase H type-1 spans 4–145 (SRSMVEIFSD…CDELARQAIA (142 aa)). 4 residues coordinate Mg(2+): Asp-13, Glu-51, Asp-73, and Asp-137.

It belongs to the RNase H family. As to quaternary structure, monomer. Requires Mg(2+) as cofactor.

Its subcellular location is the cytoplasm. The catalysed reaction is Endonucleolytic cleavage to 5'-phosphomonoester.. In terms of biological role, endonuclease that specifically degrades the RNA of RNA-DNA hybrids. The protein is Ribonuclease H of Syntrophotalea carbinolica (strain DSM 2380 / NBRC 103641 / GraBd1) (Pelobacter carbinolicus).